Reading from the N-terminus, the 258-residue chain is Putative gamma-secretase subunit APH-1C (258 aa).

Helical transmembrane passes span 5–25, 32–52, 71–91, 116–136, 161–181, 187–207, and 214–234; these read VFFGCAFIAFGPAFALYLFTI, VIFLIAGAFFWLVSLLLSSMF, LLIFGALLSVCIQELFRLAYY, LLAYVSGLGFGIMSGVFSFVN, AFMTLVVIMLHVFWGVVFFDG, WYTLLTVLLTHLVVSTQTFLS, and LVTAYIIMVLMGIWAFYVAGG.

Belongs to the APH-1 family. As to quaternary structure, potential component of the gamma-secretase complex.

Its subcellular location is the membrane. Its function is as follows. Potential subunit of the gamma-secretase complex, an endoprotease complex that catalyzes the intramembrane cleavage of integral proteins such as Notch receptors and APP (amyloid-beta precursor protein). The sequence is that of Putative gamma-secretase subunit APH-1C (Aph1c) from Mus musculus (Mouse).